We begin with the raw amino-acid sequence, 119 residues long: NADH-quinone oxidoreductase subunit A (119 aa).

3 helical membrane-spanning segments follow: residues 7–27 (FPVL…MSIG), 63–83 (LIAI…PWGV), and 88–108 (IGWP…VGFV).

This sequence belongs to the complex I subunit 3 family. In terms of assembly, NDH-1 is composed of 14 different subunits. Subunits NuoA, H, J, K, L, M, N constitute the membrane sector of the complex.

Its subcellular location is the cell inner membrane. The enzyme catalyses a quinone + NADH + 5 H(+)(in) = a quinol + NAD(+) + 4 H(+)(out). Its function is as follows. NDH-1 shuttles electrons from NADH, via FMN and iron-sulfur (Fe-S) centers, to quinones in the respiratory chain. The immediate electron acceptor for the enzyme in this species is believed to be ubiquinone. Couples the redox reaction to proton translocation (for every two electrons transferred, four hydrogen ions are translocated across the cytoplasmic membrane), and thus conserves the redox energy in a proton gradient. This chain is NADH-quinone oxidoreductase subunit A, found in Cupriavidus pinatubonensis (strain JMP 134 / LMG 1197) (Cupriavidus necator (strain JMP 134)).